An 87-amino-acid polypeptide reads, in one-letter code: Co-chaperonin GroES (87 aa).

The protein belongs to the GroES chaperonin family. Heptamer of 7 subunits arranged in a ring. Interacts with the chaperonin GroEL.

Its subcellular location is the cytoplasm. Together with the chaperonin GroEL, plays an essential role in assisting protein folding. The GroEL-GroES system forms a nano-cage that allows encapsulation of the non-native substrate proteins and provides a physical environment optimized to promote and accelerate protein folding. GroES binds to the apical surface of the GroEL ring, thereby capping the opening of the GroEL channel. The chain is Co-chaperonin GroES from Campylobacter hominis (strain ATCC BAA-381 / DSM 21671 / CCUG 45161 / LMG 19568 / NCTC 13146 / CH001A).